Consider the following 117-residue polypeptide: Photosystem II reaction center Psb28 protein (117 aa).

It belongs to the Psb28 family. As to quaternary structure, part of the photosystem II complex.

It localises to the cellular thylakoid membrane. This Prochlorococcus marinus (strain MIT 9312) protein is Photosystem II reaction center Psb28 protein.